Here is a 671-residue protein sequence, read N- to C-terminus: Solute carrier family 5 member 4 (671 aa).

Residues 1 to 38 (MPAMGTALPRAMASTASVSTSTGSSELSSLSDNINNPA) are Cytoplasmic-facing. A helical transmembrane segment spans residues 39–59 (DISVIVIYFVVVMAVGVWAMV). Over 60-65 (KTNRST) the chain is Extracellular. Residues 66–86 (VGGFFLAGRSMTWWPMGASLF) form a helical membrane-spanning segment. Residues 87-89 (ASN) lie on the Cytoplasmic side of the membrane. Residues 90–110 (IGSGHFVGLAGTGAATGIAVT) form a helical membrane-spanning segment. Residues 111–116 (AFESHS) lie on the Extracellular side of the membrane. Residues 117–137 (FALLLVLGWFFVPIYIKAGVM) traverse the membrane as a helical segment. At 138 to 159 (TMPEYLRKRFGGKRLQIYLSVL) the chain is on the cytoplasmic side. The chain crosses the membrane as a helical span at residues 160-180 (SLFICVILTISADIFSGAIFI). Position 181 (K181) is a topological domain, extracellular. The helical transmembrane segment at 182 to 202 (LALGLDLYLAIFILLAITAVF) threads the bilayer. At 203–218 (TITGGLASVIYTDTLQ) the chain is on the cytoplasmic side. A helical membrane pass occupies residues 219–239 (AIIMLVGSFILMIYAFVEVGG). At 240–288 (YESFTEKYMNAIPSVVEGDNLTISPKCYTPQPDSFHIFRDAVTGDIPWP) the chain is on the extracellular side. Residues 289–309 (GTAFGMPITALWYWCINQVIV) traverse the membrane as a helical segment. The Cytoplasmic portion of the chain corresponds to 310 to 324 (QRCLCGKNMSHVKAA). The chain crosses the membrane as a helical span at residues 325–345 (CIVCGYLKLLPIFFMVMPGMI). The Extracellular segment spans residues 346-378 (SRILYTDMVACVVPSECVKQCGVDVGCTNYAYP). A helical membrane pass occupies residues 379–399 (MLVLKLMPMGLRGLMLSVMLA). The Cytoplasmic segment spans residues 400–434 (SLMSSLTSIFNSASTLFTMDLYTKIRKKASERELL). The helical transmembrane segment at 435–455 (IAGRLFVSVLIVTSILWVPIV) threads the bilayer. Residues 456 to 467 (EVSQGGQLIHYT) lie on the Extracellular side of the membrane. The helical transmembrane segment at 468 to 488 (EAISSYLGPPIAAVFLVAIFC) threads the bilayer. Topologically, residues 489–494 (KRVNEQ) are cytoplasmic. A helical transmembrane segment spans residues 495 to 515 (GAFWGLMVGLVLGLIRMIAEF). Residues 516-537 (SYGTGSCLAPSSCPKVICGVHY) lie on the Extracellular side of the membrane. Residues 538-558 (LYYAIILFFVSILVILGVSYL) traverse the membrane as a helical segment. Topologically, residues 559 to 650 (TKPIPDVHLY…DTSEKPFWRT (92 aa)) are cytoplasmic. The span at 583-593 (DLDAEDREENE) shows a compositional bias: acidic residues. Positions 583–604 (DLDAEDREENEADARTEEDQTE) are disordered. Over residues 594–604 (ADARTEEDQTE) the composition is skewed to basic and acidic residues. The helical transmembrane segment at 651–671 (VVNVNVIVLLAVAAFFYGYFA) threads the bilayer.

Belongs to the sodium:solute symporter (SSF) (TC 2.A.21) family.

The protein resides in the cell membrane. Functionally, generates D-glucose-induced depolarization in a pH-dependent and Na(+)-independent manner, with activity in acidic conditions (pH 5) but not neutral conditions. This Rattus norvegicus (Rat) protein is Solute carrier family 5 member 4.